Reading from the N-terminus, the 183-residue chain is UPF0398 protein LSL_0930 (183 aa).

The protein belongs to the UPF0398 family.

The protein is UPF0398 protein LSL_0930 of Ligilactobacillus salivarius (strain UCC118) (Lactobacillus salivarius).